The chain runs to 240 residues: 1-(5-phosphoribosyl)-5-[(5-phosphoribosylamino)methylideneamino] imidazole-4-carboxamide isomerase (240 aa).

D10 functions as the Proton acceptor in the catalytic mechanism. Catalysis depends on D131, which acts as the Proton donor.

Belongs to the HisA/HisF family.

The protein localises to the cytoplasm. It carries out the reaction 1-(5-phospho-beta-D-ribosyl)-5-[(5-phospho-beta-D-ribosylamino)methylideneamino]imidazole-4-carboxamide = 5-[(5-phospho-1-deoxy-D-ribulos-1-ylimino)methylamino]-1-(5-phospho-beta-D-ribosyl)imidazole-4-carboxamide. It participates in amino-acid biosynthesis; L-histidine biosynthesis; L-histidine from 5-phospho-alpha-D-ribose 1-diphosphate: step 4/9. The protein is 1-(5-phosphoribosyl)-5-[(5-phosphoribosylamino)methylideneamino] imidazole-4-carboxamide isomerase of Shouchella clausii (strain KSM-K16) (Alkalihalobacillus clausii).